A 285-amino-acid chain; its full sequence is Golgi phosphoprotein 3-like (285 aa).

The tract at residues 1-43 is disordered; the sequence is MTTLTHRTRRTEVSKSCEKKIESEEDTNQERSPDNEDPGDSKD. Residues 10 to 43 are compositionally biased toward basic and acidic residues; sequence RTEVSKSCEKKIESEEDTNQERSPDNEDPGDSKD. A 1,2-diacyl-sn-glycero-3-phospho-(1D-myo-inositol 4-phosphate)-binding residues include tryptophan 67 and arginine 76. Serine 112 is modified (phosphoserine). The a 1,2-diacyl-sn-glycero-3-phospho-(1D-myo-inositol 4-phosphate) site is built by arginine 157 and arginine 160. Positions 176–187 are beta-hairpin required for oligomerization; it reads EKQNFLLFDMTT.

Belongs to the GOLPH3/VPS74 family. In terms of assembly, homooligomer. Does not interact MYO18; differs from GOLPH3 by its inability to interact with MYO18. May interact with ARF1.

Its subcellular location is the golgi apparatus. It is found in the golgi stack membrane. It localises to the trans-Golgi network membrane. Functionally, phosphatidylinositol-4-phosphate-binding protein that may antagonize the action of GOLPH3 which is required for the process of vesicle budding at the Golgi and anterograde transport to the plasma membrane. This chain is Golgi phosphoprotein 3-like (Golph3l), found in Rattus norvegicus (Rat).